The primary structure comprises 183 residues: NADH-quinone oxidoreductase subunit A (183 aa).

The next 3 helical transmembrane spans lie at 11–31, 63–83, and 98–118; these read IIAFVIGVTFLCVFMLTVPLL, FYLVAIFFVVFDLEALYLYAW, and VVIFVVDLLIALVYAFSVGAL. The tract at residues 159 to 183 is disordered; that stretch reads TGQIPAQSSGRVKSKTTPALSSEKE.

Belongs to the complex I subunit 3 family. NDH-1 is composed of 14 different subunits. Subunits NuoA, H, J, K, L, M, N constitute the membrane sector of the complex.

The protein resides in the cell inner membrane. The catalysed reaction is a quinone + NADH + 5 H(+)(in) = a quinol + NAD(+) + 4 H(+)(out). Its function is as follows. NDH-1 shuttles electrons from NADH, via FMN and iron-sulfur (Fe-S) centers, to quinones in the respiratory chain. The immediate electron acceptor for the enzyme in this species is believed to be ubiquinone. Couples the redox reaction to proton translocation (for every two electrons transferred, four hydrogen ions are translocated across the cytoplasmic membrane), and thus conserves the redox energy in a proton gradient. The chain is NADH-quinone oxidoreductase subunit A from Acinetobacter baumannii (strain AYE).